A 205-amino-acid polypeptide reads, in one-letter code: Large ribosomal subunit protein uL4 (205 aa).

The disordered stretch occupies residues 45-97 (RQGTSAVKNRSAVRGGGKKPWRQKGTGRARQGSIRAPQWRGGGTVFGPTPRSY). Basic residues predominate over residues 60–71 (GGKKPWRQKGTG).

The protein belongs to the universal ribosomal protein uL4 family. As to quaternary structure, part of the 50S ribosomal subunit.

One of the primary rRNA binding proteins, this protein initially binds near the 5'-end of the 23S rRNA. It is important during the early stages of 50S assembly. It makes multiple contacts with different domains of the 23S rRNA in the assembled 50S subunit and ribosome. Functionally, forms part of the polypeptide exit tunnel. The protein is Large ribosomal subunit protein uL4 of Lactobacillus johnsonii (strain CNCM I-12250 / La1 / NCC 533).